Here is a 218-residue protein sequence, read N- to C-terminus: Glutathione S-transferase U24 (218 aa).

The GST N-terminal domain occupies 3-82 (DEVILLDFWA…YIDETWPDNN (80 aa)). Glutathione is bound by residues 13 to 14 (SM), 39 to 40 (NK), 53 to 54 (KI), and 66 to 67 (ES). A GST C-terminal domain is found at 88–215 (DPYKRAHAKF…TFISERRKKL (128 aa)). Phosphothreonine is present on T148.

The protein belongs to the GST superfamily. Tau family.

It is found in the cytoplasm. The protein resides in the cytosol. It carries out the reaction RX + glutathione = an S-substituted glutathione + a halide anion + H(+). In terms of biological role, may be involved in the conjugation of reduced glutathione to a wide number of exogenous and endogenous hydrophobic electrophiles and have a detoxification role against certain herbicides. The polypeptide is Glutathione S-transferase U24 (GSTU24) (Arabidopsis thaliana (Mouse-ear cress)).